The sequence spans 239 residues: MKINVLTLFPDMFTPLQVSMLGRGLEDGKWDLNLVNFRDFTTDVHHHVDDTPYGGGAGMVLQIMPIKKALDSLPSTGKVIITAPQGKTFNEQMAQDWAKEDELTFICGHYEGFDQRVYDLADETVSIGDYVLTGGELPTMSMIDATVRLLPGILGNAASPVEESFSHGLLEYPQYTRPADFEGQKVPEVLTSGNHQKIAEWRHKEALKATYLHRPDMLEDRQLTNEEKKMLEEIKSELD.

S-adenosyl-L-methionine contacts are provided by residues Gly108 and 127–132; that span reads IGDYVL.

It belongs to the RNA methyltransferase TrmD family. Homodimer.

It is found in the cytoplasm. The enzyme catalyses guanosine(37) in tRNA + S-adenosyl-L-methionine = N(1)-methylguanosine(37) in tRNA + S-adenosyl-L-homocysteine + H(+). Specifically methylates guanosine-37 in various tRNAs. In Lactobacillus helveticus (strain DPC 4571), this protein is tRNA (guanine-N(1)-)-methyltransferase.